The chain runs to 271 residues: Formamidopyrimidine-DNA glycosylase (271 aa).

The active-site Schiff-base intermediate with DNA is the proline 2. Residue glutamate 3 is the Proton donor of the active site. The active-site Proton donor; for beta-elimination activity is lysine 58. Positions 92, 111, and 152 each coordinate DNA. The segment at 237-271 (MVYGREGQACKHCGRELKHATIGQRATVWCAACQR) adopts an FPG-type zinc-finger fold. Residue arginine 261 is the Proton donor; for delta-elimination activity of the active site.

The protein belongs to the FPG family. In terms of assembly, monomer. The cofactor is Zn(2+).

The enzyme catalyses Hydrolysis of DNA containing ring-opened 7-methylguanine residues, releasing 2,6-diamino-4-hydroxy-5-(N-methyl)formamidopyrimidine.. It carries out the reaction 2'-deoxyribonucleotide-(2'-deoxyribose 5'-phosphate)-2'-deoxyribonucleotide-DNA = a 3'-end 2'-deoxyribonucleotide-(2,3-dehydro-2,3-deoxyribose 5'-phosphate)-DNA + a 5'-end 5'-phospho-2'-deoxyribonucleoside-DNA + H(+). In terms of biological role, involved in base excision repair of DNA damaged by oxidation or by mutagenic agents. Acts as a DNA glycosylase that recognizes and removes damaged bases. Has a preference for oxidized purines, such as 7,8-dihydro-8-oxoguanine (8-oxoG). Has AP (apurinic/apyrimidinic) lyase activity and introduces nicks in the DNA strand. Cleaves the DNA backbone by beta-delta elimination to generate a single-strand break at the site of the removed base with both 3'- and 5'-phosphates. The sequence is that of Formamidopyrimidine-DNA glycosylase from Xanthomonas campestris pv. campestris (strain B100).